The primary structure comprises 561 residues: ATP-dependent rRNA helicase RRP3 (561 aa).

2 stretches are compositionally biased toward low complexity: residues 1–23 (MPKASASSAKMTASTSNVSSSNS) and 30–45 (ASSPSASPEVSTPSTS). The disordered stretch occupies residues 1–109 (MPKASASSAK…DEKKVATIAD (109 aa)). The span at 100–109 (DEKKVATIAD) shows a compositional bias: basic and acidic residues. The Q motif signature appears at 114–142 (VEFSDLGVIPQIVEACTNMGFKHPTPIQV). The region spanning 145-316 (IPEALQARDV…RASLKNPVRV (172 aa)) is the Helicase ATP-binding domain. An ATP-binding site is contributed by 158 to 165 (AQTGSGKT). Positions 264-267 (DEAD) match the DEAD box motif. The Helicase C-terminal domain maps to 339–487 (HKDTYLVHLA…EFPGGNDKEA (149 aa)). Residues 506 to 561 (LKDKGVGSAGGSGKRKRKMDGKYGDDMDRDDDQVQAGLPVSGNGRHQNQNRKKGRR) form a disordered region.

The protein belongs to the DEAD box helicase family. DDX47/RRP3 subfamily. Interacts with the SSU processome.

The protein resides in the nucleus. It catalyses the reaction ATP + H2O = ADP + phosphate + H(+). ATP-dependent rRNA helicase required for pre-ribosomal RNA processing. Involved in the maturation of the 35S-pre-rRNA and to its cleavage to mature 18S rRNA. The chain is ATP-dependent rRNA helicase RRP3 from Mycosarcoma maydis (Corn smut fungus).